A 441-amino-acid chain; its full sequence is Glutamate-1-semialdehyde 2,1-aminomutase (441 aa).

K279 bears the N6-(pyridoxal phosphate)lysine mark.

Belongs to the class-III pyridoxal-phosphate-dependent aminotransferase family. HemL subfamily. In terms of assembly, homodimer. It depends on pyridoxal 5'-phosphate as a cofactor.

The protein resides in the cytoplasm. It carries out the reaction (S)-4-amino-5-oxopentanoate = 5-aminolevulinate. Its pathway is porphyrin-containing compound metabolism; protoporphyrin-IX biosynthesis; 5-aminolevulinate from L-glutamyl-tRNA(Glu): step 2/2. In Leptospira borgpetersenii serovar Hardjo-bovis (strain JB197), this protein is Glutamate-1-semialdehyde 2,1-aminomutase.